A 463-amino-acid polypeptide reads, in one-letter code: Putative glycine--tRNA ligase, cytoplasmic (463 aa).

The interval 25 to 54 (TLEDSHAAKPETNAAIELPNKSKPEKSAVE) is disordered. A compositionally biased stretch (basic and acidic residues) spans 44–54 (NKSKPEKSAVE). Substrate is bound by residues Arg153 and Glu239. Residues 271-273 (RNE) and 281-286 (LRTREF) contribute to the ATP site. Substrate is bound by residues 286-290 (FTLAE) and Asn376. 398-399 (EC) serves as a coordination point for ATP.

This sequence belongs to the class-II aminoacyl-tRNA synthetase family. In terms of assembly, homodimer.

The protein resides in the cytoplasm. The enzyme catalyses tRNA(Gly) + glycine + ATP = glycyl-tRNA(Gly) + AMP + diphosphate. Functionally, catalyzes the attachment of glycine to tRNA(Gly). Is also able produce diadenosine tetraphosphate (Ap4A), a universal pleiotropic signaling molecule needed for cell regulation pathways, by direct condensation of 2 ATPs. This Arabidopsis thaliana (Mouse-ear cress) protein is Putative glycine--tRNA ligase, cytoplasmic.